We begin with the raw amino-acid sequence, 130 residues long: Small ribosomal subunit protein uS8 (130 aa).

The protein belongs to the universal ribosomal protein uS8 family. Part of the 30S ribosomal subunit.

Functionally, one of the primary rRNA binding proteins, it binds directly to 16S rRNA central domain where it helps coordinate assembly of the platform of the 30S subunit. This Methanoregula boonei (strain DSM 21154 / JCM 14090 / 6A8) protein is Small ribosomal subunit protein uS8.